A 1006-amino-acid chain; its full sequence is Unconventional myosin-Id (1006 aa).

An N-acetylalanine modification is found at Ala-2. Positions 9 to 695 (FGKADFVLMD…TLFTLEELRA (687 aa)) constitute a Myosin motor domain. 102–109 (GESGAGKT) is a binding site for ATP. Ser-200 carries the post-translational modification Phosphoserine. A Phosphotyrosine modification is found at Tyr-536. Residues 572 to 594 (MIALVDNLASKEPYYVRCIKPND) form an actin-binding region. IQ domains lie at 699–719 (IRIVLFLQKVWRGTLARMRYK) and 721–741 (TKAALTIIRYYRHYKVKSYIQ). In terms of domain architecture, TH1 spans 812-1005 (GQRADLGLQR…RSGFILSVPG (194 aa)).

Belongs to the TRAFAC class myosin-kinesin ATPase superfamily. Myosin family. As to quaternary structure, interacts (via the two IQ motifs) with calmodulin. Binds an additional calmodulin chain via a third, C-terminal region. Interacts with F-actin.

Its subcellular location is the cytoplasm. The protein resides in the perikaryon. It localises to the cell projection. It is found in the dendrite. The protein localises to the early endosome. Its subcellular location is the cell cortex. Functionally, unconventional myosin that functions as actin-based motor protein with ATPase activity. Plays a role in endosomal protein trafficking, and especially in the transfer of cargo proteins from early to recycling endosomes. Required for normal planar cell polarity in ciliated tracheal cells, for normal rotational polarity of cilia, and for coordinated, unidirectional ciliary movement in the trachea. Required for normal, polarized cilia organization in brain ependymal epithelial cells. In Canis lupus familiaris (Dog), this protein is Unconventional myosin-Id (MYO1D).